Consider the following 743-residue polypeptide: Polyribonucleotide nucleotidyltransferase (743 aa).

Positions 489 and 495 each coordinate Mg(2+). One can recognise a KH domain in the interval 556–618 (PRIEKMHIGK…PCIDAAIGMI (63 aa)). The 71-residue stretch at 628–698 (GETYPGKITS…KTGKFKLSRK (71 aa)) folds into the S1 motif domain. Residues 704–743 (PEGYVEPQPRERRERREGGREGGRNFERRGGDRDHREPRG) are disordered.

This sequence belongs to the polyribonucleotide nucleotidyltransferase family. It depends on Mg(2+) as a cofactor.

It localises to the cytoplasm. The catalysed reaction is RNA(n+1) + phosphate = RNA(n) + a ribonucleoside 5'-diphosphate. Involved in mRNA degradation. Catalyzes the phosphorolysis of single-stranded polyribonucleotides processively in the 3'- to 5'-direction. This is Polyribonucleotide nucleotidyltransferase from Porphyromonas gingivalis (strain ATCC 33277 / DSM 20709 / CIP 103683 / JCM 12257 / NCTC 11834 / 2561).